The primary structure comprises 490 residues: UDP-N-acetylmuramate--L-alanine ligase (490 aa).

Residue 126 to 132 (GTHGKTT) coordinates ATP.

This sequence belongs to the MurCDEF family.

Its subcellular location is the cytoplasm. It carries out the reaction UDP-N-acetyl-alpha-D-muramate + L-alanine + ATP = UDP-N-acetyl-alpha-D-muramoyl-L-alanine + ADP + phosphate + H(+). The protein operates within cell wall biogenesis; peptidoglycan biosynthesis. Functionally, cell wall formation. The protein is UDP-N-acetylmuramate--L-alanine ligase of Baumannia cicadellinicola subsp. Homalodisca coagulata.